Here is a 536-residue protein sequence, read N- to C-terminus: Cytochrome P450 monooxygenase phqM (536 aa).

Cysteine 464 is a heme binding site.

It belongs to the cytochrome P450 family. Heme is required as a cofactor.

It participates in alkaloid biosynthesis. In terms of biological role, cytochrome P450 monooxygenase; part of the gene cluster that mediates the biosynthesis of paraherquamide, a fungal indole alkaloid that belongs to a family of natural products containing a characteristic bicyclo[2.2.2]diazaoctane core. The first steps in the biosynthesis of paraherquamide is the production of the beta-methyl-proline precursor from L-isoleucine. They require oxidation of a terminally hydroxylated L-isoleucine to the corresponding aldehyde by enzymes which have still to be identified. Spontaneous cyclization and dehydration would yield the 4-methyl pyrolline-5-carboxylic acid, which is then reduced by the pyrroline-5-carboxylate reductase phqD leading to the beta-methyl-proline precursor. The next step of paraherquamide biosynthesis involves coupling of beta-methyl-proline and L-tryptophan by the bimodular NRPS phqB, to produce a monooxopiperazine intermediate. The reductase (R) domain of phqB utilizes NADPH for hydride transfer to reduce the thioester bond of the T domain-tethered linear dipeptide to a hemithioaminal intermediate, which spontaneously cleaves the C-S bond to release the aldehyde product. This compound undergoes spontaneous cyclization and dehydration to give a dienamine which is reverse prenylated at C-2 by the reverse prenyltransferase phqJ. The other prenyltransferase present in the cluster, phqI may be a redundant gene in the pathway. During biosynthetic assembly, the key step to produce the polycyclic core is catalyzed by the bifunctional reductase and intramolecular [4+2] Diels-Alderase, phqE, resulting in formation of the [2.2.2] diazaoctane intermediate preparaherquamide. Following formation of preparaherquamide, an indole 2,3-epoxidation-initiated pinacol-like rearrangement is catalyzed by the phqK FAD-dependent monooxygenase. The prenyltransferase phqA, the cytochrome P450 monooxygenase phqL, and the FAD-linked oxidoreductase phqH (or the cytochrome P450 monooxygenase phqM), are proposed to be involved in the formation of the pyran ring. The FAD-dependent monooxygenase phqK is likely responsible for generation of the spiro-oxindole, and the N-methylation is likely mediated by the phqN methyltransferase leading to the isolable natural product paraherquamide F. However, the order of these biosynthetic steps has still to be determined. In late-stage paraherquamide biosynthesis, the third P450 monooxygenase, phqO, is probably responsible for the C-14 hydroxylation, transforming paraherquamide F to paraherquamide G, and paraherquamide E to the final product paraherquamide A. The expansion from the 6-membered ring pyran (in paraherquamides F and G) to the 7-membered dioxepin ring (in paraherquamides A and E) represents a poorly understood but intriguing process that probably involves the 2-oxoglutarate-dependent dioxygenase phqC. Finally, the remaining members of the paraherquamide cluster, including phqI as well as phqM (or phqH), do not have a clearly prescribed role and appear to be redundant. The polypeptide is Cytochrome P450 monooxygenase phqM (Penicillium fellutanum).